The chain runs to 505 residues: 2,3-bisphosphoglycerate-independent phosphoglycerate mutase (505 aa).

Mn(2+) contacts are provided by D12 and S62. S62 serves as the catalytic Phosphoserine intermediate. Substrate contacts are provided by residues H123, 153–154 (RD), R185, R191, 257–260 (RPDR), and K330. Residues D397, H401, D438, H439, and H456 each contribute to the Mn(2+) site.

This sequence belongs to the BPG-independent phosphoglycerate mutase family. As to quaternary structure, monomer. It depends on Mn(2+) as a cofactor.

It carries out the reaction (2R)-2-phosphoglycerate = (2R)-3-phosphoglycerate. The protein operates within carbohydrate degradation; glycolysis; pyruvate from D-glyceraldehyde 3-phosphate: step 3/5. Functionally, catalyzes the interconversion of 2-phosphoglycerate and 3-phosphoglycerate. This chain is 2,3-bisphosphoglycerate-independent phosphoglycerate mutase, found in Staphylococcus aureus (strain MRSA252).